The primary structure comprises 413 residues: Histidinol-phosphate aminotransferase, chloroplastic (413 aa).

The transit peptide at 1-35 (MGVIELCNTSSICIGRANPSCCSIERNQRRRIICM) directs the protein to the chloroplast. Residue lysine 273 is modified to N6-(pyridoxal phosphate)lysine.

Belongs to the class-II pyridoxal-phosphate-dependent aminotransferase family. Histidinol-phosphate aminotransferase subfamily. Homodimer. Requires pyridoxal 5'-phosphate as cofactor. As to expression, expressed in flowers, leaves, stems and roots.

The protein resides in the plastid. The protein localises to the chloroplast. The catalysed reaction is L-histidinol phosphate + 2-oxoglutarate = 3-(imidazol-4-yl)-2-oxopropyl phosphate + L-glutamate. It participates in amino-acid biosynthesis; L-histidine biosynthesis; L-histidine from 5-phospho-alpha-D-ribose 1-diphosphate: step 7/9. This Nicotiana plumbaginifolia (Leadwort-leaved tobacco) protein is Histidinol-phosphate aminotransferase, chloroplastic (HPA).